Consider the following 150-residue polypeptide: Regulatory protein RecX (150 aa).

It belongs to the RecX family.

It is found in the cytoplasm. In terms of biological role, modulates RecA activity. This Legionella pneumophila (strain Corby) protein is Regulatory protein RecX.